The sequence spans 237 residues: DNA repair protein RecO (237 aa).

Belongs to the RecO family.

Involved in DNA repair and RecF pathway recombination. The protein is DNA repair protein RecO of Rickettsia rickettsii (strain Iowa).